The following is a 397-amino-acid chain: Major capsid protein (397 aa).

Positions 1–24 (MAAPDPYKPGKYNDPAGGVESSIG) are disordered.

Its subcellular location is the virion. Functionally, assembles to form an icosahedral capsid. This is Major capsid protein from Pseudomonas phage KPP21.